The following is a 154-amino-acid chain: Protein FAM162A (154 aa).

The required for proapoptotic activity stretch occupies residues Arg76–Lys102. A helical transmembrane segment spans residues Ile103–Ile120.

It belongs to the UPF0389 family. Interacts with HSP90AB1; HSP90AB1 is essential for FAM162A mitochondrial localization and pro-apoptotic activity. Interacts with VDAC2; the interaction is probably involved in inducing mitochondrial permeability transition.

It is found in the mitochondrion membrane. Functionally, proposed to be involved in regulation of apoptosis; the exact mechanism may differ between cell types/tissues. May be involved in hypoxia-induced cell death of transformed cells implicating cytochrome C release and caspase activation (such as CASP9) and inducing mitochondrial permeability transition. May be involved in hypoxia-induced cell death of neuronal cells probably by promoting release of AIFM1 from mitochondria to cytoplasm and its translocation to the nucleus; however, the involvement of caspases has been reported conflictingly. The chain is Protein FAM162A (FAM162A) from Homo sapiens (Human).